A 322-amino-acid chain; its full sequence is Phospho-N-acetylmuramoyl-pentapeptide-transferase (322 aa).

The next 10 helical transmembrane spans lie at 10 to 30 (YTAL…IPML), 51 to 71 (NGTP…TGLT), 79 to 99 (MAVG…DDFI), 107 to 127 (LGLK…YVAF), 146 to 166 (FVIN…VAIV), 178 to 198 (LASG…SSIA), 203 to 223 (VAVL…FNSY), 227 to 247 (VFMG…FSVL), 250 to 270 (SVLI…SVLI), and 302 to 322 (VVFI…IAVF).

This sequence belongs to the glycosyltransferase 4 family. MraY subfamily. Requires Mg(2+) as cofactor.

The protein localises to the cell membrane. The catalysed reaction is UDP-N-acetyl-alpha-D-muramoyl-L-alanyl-gamma-D-glutamyl-meso-2,6-diaminopimeloyl-D-alanyl-D-alanine + di-trans,octa-cis-undecaprenyl phosphate = di-trans,octa-cis-undecaprenyl diphospho-N-acetyl-alpha-D-muramoyl-L-alanyl-D-glutamyl-meso-2,6-diaminopimeloyl-D-alanyl-D-alanine + UMP. Its pathway is cell wall biogenesis; peptidoglycan biosynthesis. Catalyzes the initial step of the lipid cycle reactions in the biosynthesis of the cell wall peptidoglycan: transfers peptidoglycan precursor phospho-MurNAc-pentapeptide from UDP-MurNAc-pentapeptide onto the lipid carrier undecaprenyl phosphate, yielding undecaprenyl-pyrophosphoryl-MurNAc-pentapeptide, known as lipid I. The sequence is that of Phospho-N-acetylmuramoyl-pentapeptide-transferase from Clostridioides difficile (strain 630) (Peptoclostridium difficile).